The sequence spans 229 residues: Prolactin (229 aa).

The N-terminal stretch at 1–30 (MDSKGSAQKGSRLLLLLVVSNLLLCQGVVS) is a signal peptide. C34 and C41 are oxidised to a cystine. S56 bears the Phosphoserine mark. N61 carries N-linked (GlcNAc...) asparagine; partial glycosylation. Residues S64 and S120 each carry the phosphoserine modification. 2 cysteine pairs are disulfide-bonded: C88–C204 and C221–C229.

It belongs to the somatotropin/prolactin family. In terms of assembly, interacts with PRLR.

The protein localises to the secreted. Its function is as follows. Prolactin acts primarily on the mammary gland by promoting lactation, mammogenesis, mitogenesis and osmoregulation. This chain is Prolactin (PRL), found in Ovis aries (Sheep).